A 314-amino-acid chain; its full sequence is Protein YIF1B (314 aa).

Position 1 is an N-acetylmethionine (Met-1). The span at 1-12 (MHPAGLAAAAAG) shows a compositional bias: low complexity. The disordered stretch occupies residues 1–55 (MHPAGLAAAAAGTPRLRKWPSKRRIPVSQPGMADPHQLFDDTSSAQSRGYGAQRA). Residues 1-156 (MHPAGLAAAA…APRFDVNAPD (156 aa)) are Cytoplasmic-facing. Phosphothreonine is present on Thr-13. A compositionally biased stretch (basic residues) spans 15-25 (RLRKWPSKRRI). The residue at position 65 (Ser-65) is a Phosphoserine. Residues 157-177 (LYIPAMAFITYVLVAGLALGT) traverse the membrane as a helical segment. Topologically, residues 178–192 (QDRFSPDLLGLQASS) are extracellular. The chain crosses the membrane as a helical span at residues 193–213 (ALAWLTLEVLAILLSLYLVTV). Residues 214–219 (NTDLTT) are Cytoplasmic-facing. The chain crosses the membrane as a helical span at residues 220–240 (IDLVAFLGYKYVGMIGGVLMG). Leu-241 is a topological domain (extracellular). Residues 242-262 (LFGKIGYYLVLGWCCVAIFVF) traverse the membrane as a helical segment. At 263–292 (MIRTLRLKILADAAAEGVPVRGARNQLRMY) the chain is on the cytoplasmic side. Residues 293-313 (LTMAVAAAQPMLMYWLTFHLV) traverse the membrane as a helical segment. Position 314 (Arg-314) is a topological domain, extracellular.

Belongs to the YIF1 family. As to quaternary structure, interacts with HTR1A (via C-terminus). Interacts with ABCB9 (via TMD0); this interaction allows (but is not essential) the ER-to-Golgi trafficking and strongly depends on a salt bridge within TMD0.

Its subcellular location is the endoplasmic reticulum membrane. It is found in the golgi apparatus membrane. The protein resides in the endoplasmic reticulum-Golgi intermediate compartment membrane. In terms of biological role, functions in endoplasmic reticulum to Golgi vesicle-mediated transport and regulates the proper organization of the endoplasmic reticulum and the Golgi. Plays a key role in targeting to neuronal dendrites receptors such as HTR1A. Plays also a role in primary cilium and sperm flagellum assembly probably through protein transport to these compartments. The protein is Protein YIF1B of Homo sapiens (Human).